The chain runs to 382 residues: 3-hydroxyisobutyryl-CoA hydrolase, mitochondrial (382 aa).

Substrate is bound by residues E117, G142, E165, and D173.

It belongs to the enoyl-CoA hydratase/isomerase family.

It localises to the mitochondrion. The enzyme catalyses 3-hydroxy-2-methylpropanoyl-CoA + H2O = 3-hydroxy-2-methylpropanoate + CoA + H(+). It participates in amino-acid degradation; L-valine degradation. Hydrolyzes 3-hydroxyisobutyryl-CoA (HIBYL-CoA), a saline catabolite. Has high activity toward isobutyryl-CoA. Could be an isobutyryl-CoA dehydrogenase that functions in valine catabolism. Also hydrolyzes 3-hydroxypropanoyl-CoA. The protein is 3-hydroxyisobutyryl-CoA hydrolase, mitochondrial (hibch) of Danio rerio (Zebrafish).